Here is a 198-residue protein sequence, read N- to C-terminus: Recombination protein RecR (198 aa).

The C4-type zinc-finger motif lies at 57 to 72 (CSICGNLTDDDPCHIC). Residues 80 to 175 (TTILVVEDAK…KVTRLARGLA (96 aa)) enclose the Toprim domain.

The protein belongs to the RecR family.

In terms of biological role, may play a role in DNA repair. It seems to be involved in an RecBC-independent recombinational process of DNA repair. It may act with RecF and RecO. The chain is Recombination protein RecR from Streptococcus pyogenes serotype M5 (strain Manfredo).